A 120-amino-acid polypeptide reads, in one-letter code: Spermidine export protein MdtJ (120 aa).

Helical transmembrane passes span 1–21, 31–51, 54–74, and 81–101; these read MFYW…TLSM, TGFI…SFAV, IALG…ITLF, and EALS…IALI.

Belongs to the drug/metabolite transporter (DMT) superfamily. Small multidrug resistance (SMR) (TC 2.A.7.1) family. MdtJ subfamily. In terms of assembly, forms a complex with MdtI.

It localises to the cell inner membrane. In terms of biological role, catalyzes the excretion of spermidine. The chain is Spermidine export protein MdtJ from Citrobacter koseri (strain ATCC BAA-895 / CDC 4225-83 / SGSC4696).